The chain runs to 440 residues: Putative sodium-coupled neutral amino acid transporter 8 (440 aa).

11 helical membrane-spanning segments follow: residues 29–49, 58–78, 100–120, 156–176, 183–203, 223–243, 255–275, 300–320, 350–370, 373–393, and 418–438; these read AIFIMLKSALGAGLLNFPWAF, AIMVELVSLIFLISGLVILGY, IGKLCGICYIINLFMICVAFL, FAITVLCLVIILPLSIPKEIS, ILGTLAACYLTVMIIIKYYVM, MFSVVPTICFGFQCHEACVTI, WAAVSVVSMLICLLIYSFTGI, VIIARLLFTISIITIYPIILL, VVITVLWILVTLLIALFVPDI, VISVIGGISAFFIFIFPGLCL, and VVCGAFVFGQSTTIAVMEIIA.

This sequence belongs to the amino acid/polyamine transporter 2 family.

It localises to the membrane. Functionally, putative sodium-dependent amino acid/proton antiporter. This is Putative sodium-coupled neutral amino acid transporter 8 (slc38a8) from Xenopus tropicalis (Western clawed frog).